The chain runs to 493 residues: Phospholipid transfer protein (493 aa).

A signal peptide spans 1–17; the sequence is MALFGALFLALLAGAHA. Asparagine 64 is a glycosylation site (N-linked (GlcNAc...) (complex) asparagine). Residue asparagine 94 is glycosylated (N-linked (GlcNAc...) asparagine). Asparagine 117 is a glycosylation site (N-linked (GlcNAc...) (complex) asparagine). Asparagine 143 carries N-linked (GlcNAc...) asparagine glycosylation. Cysteine 146 and cysteine 185 form a disulfide bridge. Asparagine 245 is a glycosylation site (N-linked (GlcNAc...) (complex) asparagine). An N-linked (GlcNAc...) asparagine glycan is attached at asparagine 398.

The protein belongs to the BPI/LBP/Plunc superfamily. BPI/LBP family. Glycosylation is necessary for secretion and its phospholipid transfer activity. In terms of tissue distribution, widely expressed. Highest level of expression in the ovary, thymus and placenta, with moderate levels found in the pancreas, small intestine, testis, lung and prostrate. Low level expression in the kidney, liver and spleen, with very low levels found in the heart, colon, skeletal muscle, leukocytes and brain. Expressed in the cortical neurons.

It localises to the secreted. It is found in the nucleus. The catalysed reaction is a 1,2-diacyl-sn-glycero-3-phosphocholine(in) = a 1,2-diacyl-sn-glycero-3-phosphocholine(out). The enzyme catalyses a 1,2-diacyl-sn-glycero-3-phosphoethanolamine(in) = a 1,2-diacyl-sn-glycero-3-phosphoethanolamine(out). It carries out the reaction a 1,2-diacyl-sn-glycerol(in) = a 1,2-diacyl-sn-glycerol(out). It catalyses the reaction a 1,2-diacyl-sn-glycero-3-phosphate(in) = a 1,2-diacyl-sn-glycero-3-phosphate(out). The catalysed reaction is a sphingomyelin(in) = a sphingomyelin(out). The enzyme catalyses a 1,2-diacyl-sn-glycero-3-phospho-(1'-sn-glycerol)(in) = a 1,2-diacyl-sn-glycero-3-phospho-(1'-sn-glycerol)(out). It carries out the reaction a 1,2-diacyl-sn-glycero-3-phospho-(1D-myo-inositol)(in) = a 1,2-diacyl-sn-glycero-3-phospho-(1D-myo-inositol)(out). It catalyses the reaction 1-hexadecanoyl-2-(5Z,8Z,11Z,14Z-eicosatetraenoyl)-sn-glycero-3-phosphoethanolamine(in) = 1-hexadecanoyl-2-(5Z,8Z,11Z,14Z-eicosatetraenoyl)-sn-glycero-3-phosphoethanolamine(out). The catalysed reaction is N-(hexadecanoyl)-sphing-4-enine-1-phosphocholine(in) = N-(hexadecanoyl)-sphing-4-enine-1-phosphocholine(out). The enzyme catalyses 1,2-dihexadecanoyl-sn-glycero-3-phosphocholine(in) = 1,2-dihexadecanoyl-sn-glycero-3-phosphocholine(out). Mediates the transfer of phospholipids and free cholesterol from triglyceride-rich lipoproteins (low density lipoproteins or LDL and very low density lipoproteins or VLDL) into high-density lipoproteins (HDL) as well as the exchange of phospholipids between triglyceride-rich lipoproteins themselves. Facilitates the transfer of a spectrum of different lipid molecules, including diacylglycerol, phosphatidic acid, sphingomyelin, phosphatidylcholine, phosphatidylinositol, phosphatidylglycerol, cerebroside and phosphatidyl ethanolamine. Plays an important role in HDL remodeling which involves modulating the size and composition of HDL. Also plays a key role in the uptake of cholesterol from peripheral cells and tissues that is subsequently transported to the liver for degradation and excretion. Two distinct forms of PLTP exist in plasma: an active form that can transfer phosphatidylcholine from phospholipid vesicles to HDL, and an inactive form that lacks this capability. The polypeptide is Phospholipid transfer protein (PLTP) (Homo sapiens (Human)).